Consider the following 620-residue polypeptide: 1-deoxy-D-xylulose-5-phosphate synthase (620 aa).

Thiamine diphosphate contacts are provided by residues H80 and 121 to 123 (GHS). Position 152 (D152) interacts with Mg(2+). Thiamine diphosphate is bound by residues 153 to 154 (GA), N181, Y288, and E370. N181 contacts Mg(2+).

The protein belongs to the transketolase family. DXPS subfamily. In terms of assembly, homodimer. Requires Mg(2+) as cofactor. Thiamine diphosphate is required as a cofactor.

It catalyses the reaction D-glyceraldehyde 3-phosphate + pyruvate + H(+) = 1-deoxy-D-xylulose 5-phosphate + CO2. It functions in the pathway metabolic intermediate biosynthesis; 1-deoxy-D-xylulose 5-phosphate biosynthesis; 1-deoxy-D-xylulose 5-phosphate from D-glyceraldehyde 3-phosphate and pyruvate: step 1/1. In terms of biological role, catalyzes the acyloin condensation reaction between C atoms 2 and 3 of pyruvate and glyceraldehyde 3-phosphate to yield 1-deoxy-D-xylulose-5-phosphate (DXP). This is 1-deoxy-D-xylulose-5-phosphate synthase from Escherichia coli O6:K15:H31 (strain 536 / UPEC).